Consider the following 321-residue polypeptide: Collectin-43 (321 aa).

The signal sequence occupies residues 1 to 20 (MLPLPLSILLLLTQSQSFLG). The disordered stretch occupies residues 43–163 (PADSLRGHDG…GEKGARGETS (121 aa)). Basic and acidic residues predominate over residues 47-65 (LRGHDGRDGKEGPQGEKGD). Residues 49–162 (GHDGRDGKEG…PGEKGARGET (114 aa)) enclose the Collagen-like domain. Composition is skewed to gly residues over residues 100–109 (GPEGGVGAPG) and 124–133 (GTPGPGGAIG). Positions 147 to 159 (KGDRGDPGEKGAR) are enriched in basic and acidic residues. The region spanning 222–321 (QLCREAKGQL…REERLVICEF (100 aa)) is the C-type lectin domain. 2 disulfides stabilise this stretch: Cys-224–Cys-319 and Cys-297–Cys-311.

It belongs to the SFTPD family. As to quaternary structure, oligomeric complex of 4 set of homotrimers. Hydroxylated. As to expression, liver specific.

It is found in the secreted. Its function is as follows. Lectin that binds to various sugars: mannose = ManNAc &gt; fucose &gt; GlcNAc &gt; glucose = maltose &gt; galactose &gt; lactose &gt; GalNAc. Could play a role in immune defense. The protein is Collectin-43 (CL43) of Bos taurus (Bovine).